We begin with the raw amino-acid sequence, 498 residues long: 3-octaprenyl-4-hydroxybenzoate carboxy-lyase (498 aa).

N175 provides a ligand contact to Mn(2+). Residues 178 to 180 (IYR), 192 to 194 (RWL), and 197 to 198 (RG) contribute to the prenylated FMN site. E241 is a Mn(2+) binding site. D290 functions as the Proton donor in the catalytic mechanism.

This sequence belongs to the UbiD family. In terms of assembly, homohexamer. The cofactor is prenylated FMN. Requires Mn(2+) as cofactor.

It is found in the cell membrane. The catalysed reaction is a 4-hydroxy-3-(all-trans-polyprenyl)benzoate + H(+) = a 2-(all-trans-polyprenyl)phenol + CO2. It participates in cofactor biosynthesis; ubiquinone biosynthesis. Functionally, catalyzes the decarboxylation of 3-octaprenyl-4-hydroxy benzoate to 2-octaprenylphenol, an intermediate step in ubiquinone biosynthesis. The sequence is that of 3-octaprenyl-4-hydroxybenzoate carboxy-lyase from Yersinia pestis bv. Antiqua (strain Antiqua).